The following is a 90-amino-acid chain: Putative defensin-like protein 168 (90 aa).

Positions 1 to 27 (MKYFTLFMISYIFISIFVFSHIHDVEA) are cleaved as a signal peptide. 4 disulfide bridges follow: Cys-32-Cys-90, Cys-43-Cys-66, Cys-51-Cys-84, and Cys-64-Cys-86.

The protein belongs to the DEFL family.

The protein resides in the secreted. This is Putative defensin-like protein 168 from Arabidopsis thaliana (Mouse-ear cress).